The following is a 242-amino-acid chain: Glucosamine-6-phosphate deaminase (242 aa).

Catalysis depends on Asp-67, which acts as the Proton acceptor; for enolization step. Asn-137 functions as the For ring-opening step in the catalytic mechanism. His-139 serves as the catalytic Proton acceptor; for ring-opening step. Glu-144 (for ring-opening step) is an active-site residue.

Belongs to the glucosamine/galactosamine-6-phosphate isomerase family. NagB subfamily.

The catalysed reaction is alpha-D-glucosamine 6-phosphate + H2O = beta-D-fructose 6-phosphate + NH4(+). It functions in the pathway amino-sugar metabolism; N-acetylneuraminate degradation; D-fructose 6-phosphate from N-acetylneuraminate: step 5/5. Catalyzes the reversible isomerization-deamination of glucosamine 6-phosphate (GlcN6P) to form fructose 6-phosphate (Fru6P) and ammonium ion. The sequence is that of Glucosamine-6-phosphate deaminase from Staphylococcus haemolyticus (strain JCSC1435).